Here is a 919-residue protein sequence, read N- to C-terminus: Leucine--tRNA ligase (919 aa).

The 'HIGH' region signature appears at 83-93 (PYPSGKLHMGH). The short motif at 670–674 (KMSKS) is the 'KMSKS' region element. Lysine 673 provides a ligand contact to ATP.

It belongs to the class-I aminoacyl-tRNA synthetase family.

It is found in the cytoplasm. The enzyme catalyses tRNA(Leu) + L-leucine + ATP = L-leucyl-tRNA(Leu) + AMP + diphosphate. This Psychrobacter cryohalolentis (strain ATCC BAA-1226 / DSM 17306 / VKM B-2378 / K5) protein is Leucine--tRNA ligase.